Consider the following 82-residue polypeptide: 4-(gamma-L-glutamylamino)butanoyl-[BtrI acyl-carrier protein] monooxygenase BtrO (82 aa).

Homotetramer.

The enzyme catalyses 4-(gamma-L-glutamylamino)butanoyl-[BtrI ACP] + FMNH2 + O2 = 4-(gamma-L-glutamylamino)-(2S)-2-hydroxybutanoyl-[BtrI ACP] + FMN + H2O + H(+). It functions in the pathway antibiotic biosynthesis; butirosin biosynthesis. NAD(P)H:FMN oxidoreductase component of a two-component system involved in the biosynthesis of the side chain of the aminoglycoside antibiotics in the biosynthetic pathway of butirosin. Together with BtrO, mediates hydroxylation of gamma-L-Glu-GABA-S-BtrI. This chain is 4-(gamma-L-glutamylamino)butanoyl-[BtrI acyl-carrier protein] monooxygenase BtrO (btrV), found in Niallia circulans (Bacillus circulans).